A 313-amino-acid chain; its full sequence is MVIGNRVLLPLTKRYYNARYRKVLHPELREEIIAHNCYCEEVNSKLHFDDEKIDPGISLKTAVPSYDKHVMLISDINRGMAKKPGVWKNIWESRIENNTTHPYDIISKLNFGPGVLFNAISITSSLESFAPTSLEFYDFLVMPDMRYYRVKKPDIEKFSQYINSGHAVAPKLSFSDYLSGKAAATTVSNNNQITLSLDDSIYYRELKNDAWLFVCGHEKRDMRCGIMGPEILHSVNTANSKPLVNNTGIISHIGGHKFAGNILIYKPIENQNGRKKVDSLWFGKVTPFNVSEIVQSVNEGVIIENNFRGGLSL.

It belongs to the AIM32 family.

The sequence is that of Altered inheritance of mitochondria protein 32 (AIM32) from Candida glabrata (strain ATCC 2001 / BCRC 20586 / JCM 3761 / NBRC 0622 / NRRL Y-65 / CBS 138) (Yeast).